The following is a 174-amino-acid chain: Inosine/xanthosine triphosphatase (174 aa).

Mg(2+) is bound at residue Asp-68. Residue 68–69 coordinates substrate; it reads DA.

This sequence belongs to the YjjX NTPase family. Homodimer. Requires Mg(2+) as cofactor. The cofactor is Mn(2+).

The enzyme catalyses XTP + H2O = XDP + phosphate + H(+). It carries out the reaction ITP + H2O = IDP + phosphate + H(+). In terms of biological role, phosphatase that hydrolyzes non-canonical purine nucleotides such as XTP and ITP to their respective diphosphate derivatives. Probably excludes non-canonical purines from DNA/RNA precursor pool, thus preventing their incorporation into DNA/RNA and avoiding chromosomal lesions. This Photobacterium profundum (strain SS9) protein is Inosine/xanthosine triphosphatase.